Reading from the N-terminus, the 166-residue chain is Cold-inducible RNA-binding protein B (166 aa).

The RRM domain maps to 5–83 (GKLFIGGLNF…RQIRVDQAGK (79 aa)). The disordered stretch occupies residues 68-166 (GKAVDGRQIR…DSYDSYATHE (99 aa)). A compositionally biased stretch (gly residues) spans 92–115 (YRGGSSGGRGFFRGGRGRGGGDRG). Over residues 133 to 149 (GSRDYYSSGRSQGSYGD) the composition is skewed to low complexity. Positions 157–166 (DSYDSYATHE) are enriched in basic and acidic residues.

As to quaternary structure, interacts with prmt1. Interacts with elavl1/elrA (via RRM3). Associates with ribosomes. In terms of processing, methylated on arginine residues within RGG motifs. Methylation by prmt1 promotes cytoplasmic accumulation. In terms of tissue distribution, in adults, most abundant in testis, ovary, brain and liver, with lower expression in kidney and heart.

The protein resides in the nucleus. Its subcellular location is the nucleoplasm. The protein localises to the cytoplasm. In terms of biological role, cold-inducible mRNA binding protein. Acts cooperatively with elavl1/elrA to stabilize AU-rich element (ARE)-containing mRNAs by binding to them and inhibiting their deadenylation. Essential for embryonic gastrulation and neural development, acting to maintain the expression of a set of adhesion molecules, and cell movement during embryogenesis. Required for pronephros development. This Xenopus laevis (African clawed frog) protein is Cold-inducible RNA-binding protein B (cirbp-b).